A 291-amino-acid chain; its full sequence is Translocon-associated protein subunit alpha (291 aa).

The signal sequence occupies residues 1 to 20; that stretch reads MRLLPRLLLLLLLVFPATVL. Residues 21-207 lie on the Lumenal side of the membrane; that stretch reads FRGGPRGSLA…EREDGLDGET (187 aa). Positions 34–83 are disordered; that stretch reads DLTEDEETVEDSIIEDEDDEAEVEEDEPTDLVEDKEEEDVSGEPEASPSA. Acidic residues predominate over residues 35–75; sequence LTEDEETVEDSIIEDEDDEAEVEEDEPTDLVEDKEEEDVSG. N-linked (GlcNAc...) asparagine glycans are attached at residues Asn-136 and Asn-191. The helical transmembrane segment at 208–228 threads the bilayer; that stretch reads IFMYMFLAGLGLLVIVGLHQL. Topologically, residues 229–291 are cytoplasmic; it reads LESRKRKRPV…AQKRSVGSDE (63 aa). Ser-247 carries the phosphoserine modification. Thr-260 is modified (phosphothreonine). The segment at 263-291 is disordered; it reads QIMQSRRDKASPRRLPRKRAQKRSVGSDE. Position 273 is a phosphoserine (Ser-273). Over residues 274–284 the composition is skewed to basic residues; sequence PRRLPRKRAQK.

The protein belongs to the TRAP-alpha family. Heterotetramer of TRAP-alpha, TRAP-beta, TRAP-delta and TRAP-gamma. Interacts with palmitoylated calnexin (CALX), the interaction is required for efficient folding of glycosylated proteins. In terms of processing, phosphorylated in its cytoplasmic tail.

The protein localises to the endoplasmic reticulum membrane. In terms of biological role, TRAP proteins are part of a complex whose function is to bind calcium to the ER membrane and thereby regulate the retention of ER resident proteins. May be involved in the recycling of the translocation apparatus after completion of the translocation process or may function as a membrane-bound chaperone facilitating folding of translocated proteins. The polypeptide is Translocon-associated protein subunit alpha (SSR1) (Pongo abelii (Sumatran orangutan)).